The sequence spans 120 residues: Large ribosomal subunit protein uL18 (120 aa).

The protein belongs to the universal ribosomal protein uL18 family. Part of the 50S ribosomal subunit; part of the 5S rRNA/L5/L18/L25 subcomplex. Contacts the 5S and 23S rRNAs.

Its function is as follows. This is one of the proteins that bind and probably mediate the attachment of the 5S RNA into the large ribosomal subunit, where it forms part of the central protuberance. This Treponema pallidum (strain Nichols) protein is Large ribosomal subunit protein uL18.